Consider the following 37-residue polypeptide: MKVRASIKKICKDCKIIKRRSINRVICLIKKHKQRQG.

This sequence belongs to the bacterial ribosomal protein bL36 family.

The chain is Large ribosomal subunit protein bL36 from Mesomycoplasma hyopneumoniae (strain 7448) (Mycoplasma hyopneumoniae).